The following is a 660-amino-acid chain: Bifunctional polymyxin resistance protein ArnA (660 aa).

The formyltransferase ArnAFT stretch occupies residues 1 to 304 (MKTVVFAYHD…MLGLVQGSRL (304 aa)). Position 86–88 (86–88 (HLI)) interacts with (6R)-10-formyltetrahydrofolate. The active-site Proton donor; for formyltransferase activity is the H104. (6R)-10-formyltetrahydrofolate-binding positions include R114 and 136–140 (VKRAD). Residues 314–660 (RRTRVLILGV…RTVDLTDKPS (347 aa)) are dehydrogenase ArnADH. NAD(+)-binding positions include D347 and 368–369 (DI). UDP-alpha-D-glucuronate is bound by residues A393, Y398, and 432–433 (TS). Residue E434 is the Proton acceptor; for decarboxylase activity of the active site. Residues R460, N492, 526–535 (KLIDGGKQKR), and Y613 each bind UDP-alpha-D-glucuronate. R619 serves as the catalytic Proton donor; for decarboxylase activity.

In the N-terminal section; belongs to the Fmt family. UDP-L-Ara4N formyltransferase subfamily. The protein in the C-terminal section; belongs to the NAD(P)-dependent epimerase/dehydratase family. UDP-glucuronic acid decarboxylase subfamily. Homohexamer, formed by a dimer of trimers.

The catalysed reaction is UDP-alpha-D-glucuronate + NAD(+) = UDP-beta-L-threo-pentopyranos-4-ulose + CO2 + NADH. It carries out the reaction UDP-4-amino-4-deoxy-beta-L-arabinose + (6R)-10-formyltetrahydrofolate = UDP-4-deoxy-4-formamido-beta-L-arabinose + (6S)-5,6,7,8-tetrahydrofolate + H(+). It participates in nucleotide-sugar biosynthesis; UDP-4-deoxy-4-formamido-beta-L-arabinose biosynthesis; UDP-4-deoxy-4-formamido-beta-L-arabinose from UDP-alpha-D-glucuronate: step 1/3. Its pathway is nucleotide-sugar biosynthesis; UDP-4-deoxy-4-formamido-beta-L-arabinose biosynthesis; UDP-4-deoxy-4-formamido-beta-L-arabinose from UDP-alpha-D-glucuronate: step 3/3. It functions in the pathway bacterial outer membrane biogenesis; lipopolysaccharide biosynthesis. Bifunctional enzyme that catalyzes the oxidative decarboxylation of UDP-glucuronic acid (UDP-GlcUA) to UDP-4-keto-arabinose (UDP-Ara4O) and the addition of a formyl group to UDP-4-amino-4-deoxy-L-arabinose (UDP-L-Ara4N) to form UDP-L-4-formamido-arabinose (UDP-L-Ara4FN). The modified arabinose is attached to lipid A and is required for resistance to polymyxin and cationic antimicrobial peptides. The protein is Bifunctional polymyxin resistance protein ArnA of Shigella flexneri serotype 5b (strain 8401).